A 342-amino-acid chain; its full sequence is uncharacterized protein (342 aa).

The N-terminal stretch at 1–18 (MWKKLMLLLLMAIPLVSA) is a signal peptide.

This is an uncharacterized protein from Methanocaldococcus jannaschii (strain ATCC 43067 / DSM 2661 / JAL-1 / JCM 10045 / NBRC 100440) (Methanococcus jannaschii).